A 453-amino-acid chain; its full sequence is Venom prothrombin activator notecarin-D2 (453 aa).

The first 20 residues, 1–20, serve as a signal peptide directing secretion; the sequence is MAPQLLLCLILTFLWSLPEA. The propeptide occupies 21 to 40; the sequence is ESNVFLKSKVANRFLQRTKR. Residues 41–86 enclose the Gla domain; sequence SNSLFEEIRPGNIERECIEEKCSKEEAREVFEDNEKTETFWNVYVD. A 4-carboxyglutamate mark is found at Glu46, Glu47, Glu54, Glu56, Glu59, Glu60, Glu65, Glu66, Glu69, Glu72, and Glu75. A disulfide bridge connects residues Cys57 and Cys62. The 37-residue stretch at 86 to 122 folds into the EGF-like 1; calcium-binding domain; it reads DGDQCSSNPCHYRGTCKDGIGSYTCTCLPNYEGKNCE. 11 cysteine pairs are disulfide-bonded: Cys90–Cys101, Cys95–Cys110, Cys112–Cys121, Cys129–Cys140, Cys136–Cys149, Cys151–Cys164, Cys172–Cys326, Cys216–Cys221, Cys236–Cys252, Cys374–Cys388, and Cys399–Cys427. An O-linked (Hex...) serine glycan is attached at Ser92. An EGF-like 2 domain is found at 129 to 164; the sequence is CRAFNGNCWHFCKRVQSETQCSCAESYLLGVDGHSC. Positions 182–209 are cleaved as a propeptide — activation peptide; that stretch reads REASLPDFVQSQKATVLKKSDNPSPDIR. A Peptidase S1 domain is found at 210-451; that stretch reads IVNGMDCKLG…FIPWIKKIMS (242 aa). His251 functions as the Charge relay system in the catalytic mechanism. The N-linked (GlcNAc...) asparagine glycan is linked to Asn254. Residue Asp306 is the Charge relay system of the active site. The active-site Charge relay system is Ser403.

This sequence belongs to the peptidase S1 family. Snake venom subfamily. As to quaternary structure, heterodimer of a light chain and a heavy chain; disulfide-linked. Gamma-carboxyglutamate residues are formed by vitamin K dependent carboxylation. These residues are essential for the binding of calcium. As to expression, expressed by the venom gland.

The protein localises to the secreted. The enzyme catalyses Selective cleavage of Arg-|-Thr and then Arg-|-Ile bonds in prothrombin to form thrombin.. In terms of biological role, snake prothrombin activator that attacks the hemostatic system of prey. This protein is functionally similar to blood coagulation factor Xa. The chain is Venom prothrombin activator notecarin-D2 from Notechis scutatus scutatus (Mainland tiger snake).